A 213-amino-acid chain; its full sequence is GTP cyclohydrolase 1 (213 aa).

A disordered region spans residues 1 to 27; sequence MDDVVKSLLQRTTSSLTKPAPARPSRE. Zn(2+) contacts are provided by Cys-100, His-103, and Cys-172.

This sequence belongs to the GTP cyclohydrolase I family. In terms of assembly, homomer.

It carries out the reaction GTP + H2O = 7,8-dihydroneopterin 3'-triphosphate + formate + H(+). Its pathway is cofactor biosynthesis; 7,8-dihydroneopterin triphosphate biosynthesis; 7,8-dihydroneopterin triphosphate from GTP: step 1/1. The chain is GTP cyclohydrolase 1 from Beijerinckia indica subsp. indica (strain ATCC 9039 / DSM 1715 / NCIMB 8712).